Reading from the N-terminus, the 541-residue chain is CRISPR-associated exonuclease Cas4/endonuclease Cas1 fusion (541 aa).

Residues 1-179 (MGIHSLLYCE…NCSLAPVCLP (179 aa)) form a CRISPR-associated exonuclease Cas4 region. Cysteine 9 serves as a coordination point for [4Fe-4S] cluster. Positions 65 and 78 each coordinate Mn(2+). [4Fe-4S] cluster contacts are provided by cysteine 168, cysteine 171, and cysteine 177. The CRISPR-associated endonuclease Cas1 stretch occupies residues 204-541 (TLHVFGHDSR…ANIFAQARLR (338 aa)). Mn(2+) contacts are provided by glutamate 365, histidine 433, and glutamate 448.

The protein in the N-terminal section; belongs to the CRISPR-associated exonuclease Cas4 family. In the C-terminal section; belongs to the CRISPR-associated endonuclease Cas1 family. As to quaternary structure, homodimer, forms a heterotetramer with a Cas2 homodimer. [4Fe-4S] cluster is required as a cofactor. Mg(2+) serves as cofactor. The cofactor is Mn(2+).

It carries out the reaction exonucleolytic cleavage in the 5'- to 3'-direction to yield nucleoside 3'-phosphates.. CRISPR (clustered regularly interspaced short palindromic repeat), is an adaptive immune system that provides protection against mobile genetic elements (viruses, transposable elements and conjugative plasmids). CRISPR clusters contain spacers, sequences complementary to antecedent mobile elements, and target invading nucleic acids. CRISPR clusters are transcribed and processed into CRISPR RNA (crRNA). The Cas4 region acts as a ssDNA exonuclease, while the Cas1 region acts as a dsDNA endonuclease. Involved in the integration of spacer DNA into the CRISPR cassette. The polypeptide is CRISPR-associated exonuclease Cas4/endonuclease Cas1 fusion (cas4-cas1) (Leptospira interrogans serogroup Icterohaemorrhagiae serovar Lai (strain 56601)).